Consider the following 221-residue polypeptide: Eukaryotic translation initiation factor 3 subunit K (221 aa).

The PCI domain maps to 46–207; that stretch reads YDLEANLACL…NIKTKHITEK (162 aa).

It belongs to the eIF-3 subunit K family. Component of the eukaryotic translation initiation factor 3 (eIF-3) complex.

Its subcellular location is the cytoplasm. Its function is as follows. Component of the eukaryotic translation initiation factor 3 (eIF-3) complex, which is involved in protein synthesis of a specialized repertoire of mRNAs and, together with other initiation factors, stimulates binding of mRNA and methionyl-tRNAi to the 40S ribosome. The eIF-3 complex specifically targets and initiates translation of a subset of mRNAs involved in cell proliferation. This chain is Eukaryotic translation initiation factor 3 subunit K, found in Culex quinquefasciatus (Southern house mosquito).